The sequence spans 141 residues: Ribonuclease P protein component (141 aa).

2 disordered regions span residues R37 to T56 and R114 to K141. The segment covering R114–R123 has biased composition (basic and acidic residues).

This sequence belongs to the RnpA family. In terms of assembly, consists of a catalytic RNA component (M1 or rnpB) and a protein subunit.

The catalysed reaction is Endonucleolytic cleavage of RNA, removing 5'-extranucleotides from tRNA precursor.. Functionally, RNaseP catalyzes the removal of the 5'-leader sequence from pre-tRNA to produce the mature 5'-terminus. It can also cleave other RNA substrates such as 4.5S RNA. The protein component plays an auxiliary but essential role in vivo by binding to the 5'-leader sequence and broadening the substrate specificity of the ribozyme. This is Ribonuclease P protein component from Brucella suis biovar 1 (strain 1330).